A 379-amino-acid polypeptide reads, in one-letter code: MEGNRDEAEKCVQIAREALSAGNRDKAQRFLQKAEKLYPLPAARALLEIIMKNGSTAGSSTHCRKPPGSSDQSKPSCGKDGTSGAGEGGKVYTKDQVEGVLSINKCKNYYEVLGVTKDAGDEDLKKAYRKLALKFHPDKNHAPGATDAFKKIGNAYAVLSNPEKRKQYDLTGSEEQACNHQNNGRFNFHRGCEADITPEDLFNIFFGGGFPSGSVHSFSNGRAAYSHQHQHRHSGHEREEERADGGFSVFIQLMPIIVLILVSLLSQLMVSNPPYSLYPRSGSGQTIKMQTENLGVVYYVSKDFKSEYKGTLLQKVEKSVEEDYVTNIRNNCWKERQQKTDMQYAAKVYRDEQLRRKADALSMENCKELERLTSLYKGG.

Residues 1 to 244 (MEGNRDEAEK…GHEREEERAD (244 aa)) lie on the Cytoplasmic side of the membrane. Residues 56–90 (TAGSSTHCRKPPGSSDQSKPSCGKDGTSGAGEGGK) form a disordered region. Residues 108–172 (NYYEVLGVTK…EKRKQYDLTG (65 aa)) form the J domain. The helical transmembrane segment at 245 to 265 (GGFSVFIQLMPIIVLILVSLL) threads the bilayer. Topologically, residues 266 to 379 (SQLMVSNPPY…ERLTSLYKGG (114 aa)) are lumenal.

This sequence belongs to the DnaJ family. DNAJB12/DNAJB14 subfamily. Interacts (via J domain) with HSPA8/Hsc70. Forms a multiprotein complex, at least composed of DNAJB12, DNAJB14, HSPA8/Hsc70 and SGTA; interaction with DNAJB14 and HSPA8/Hsc70 is direct.

It is found in the endoplasmic reticulum membrane. The protein localises to the nucleus membrane. Its function is as follows. Acts as a co-chaperone with HSPA8/Hsc70; required to promote protein folding and trafficking, prevent aggregation of client proteins, and promote unfolded proteins to endoplasmic reticulum-associated degradation (ERAD) pathway. Acts by determining HSPA8/Hsc70's ATPase and polypeptide-binding activities. Can also act independently of HSPA8/Hsc70: together with DNAJB12, acts as a chaperone that promotes maturation of potassium channels KCND2 and KCNH2 by stabilizing nascent channel subunits and assembling them into tetramers. While stabilization of nascent channel proteins is dependent on HSPA8/Hsc70, the process of oligomerization of channel subunits is independent of HSPA8/Hsc70. When overexpressed, forms membranous structures together with DNAJB12 and HSPA8/Hsc70 within the nucleus; the role of these structures, named DJANGOs, is still unclear. The protein is DnaJ homolog subfamily B member 14 of Mus musculus (Mouse).